Consider the following 698-residue polypeptide: Elongation factor G 1 (698 aa).

Residues 8–290 (ERYRNIGICA…AVVEFLPAPV (283 aa)) form the tr-type G domain. Residues 17 to 24 (AHVDAGKT), 88 to 92 (DTPGH), and 142 to 145 (NKMD) contribute to the GTP site.

It belongs to the TRAFAC class translation factor GTPase superfamily. Classic translation factor GTPase family. EF-G/EF-2 subfamily.

Its subcellular location is the cytoplasm. Catalyzes the GTP-dependent ribosomal translocation step during translation elongation. During this step, the ribosome changes from the pre-translocational (PRE) to the post-translocational (POST) state as the newly formed A-site-bound peptidyl-tRNA and P-site-bound deacylated tRNA move to the P and E sites, respectively. Catalyzes the coordinated movement of the two tRNA molecules, the mRNA and conformational changes in the ribosome. In Shewanella sp. (strain MR-4), this protein is Elongation factor G 1.